A 404-amino-acid chain; its full sequence is Argininosuccinate synthase (404 aa).

Residues alanine 10–serine 18 and alanine 38 each bind ATP. An L-citrulline-binding site is contributed by tyrosine 89. Glycine 119 provides a ligand contact to ATP. L-aspartate-binding residues include threonine 121, asparagine 125, and aspartate 126. Asparagine 125 is an L-citrulline binding site. The L-citrulline site is built by arginine 129, serine 177, serine 186, glutamate 262, and tyrosine 274.

Belongs to the argininosuccinate synthase family. Type 1 subfamily. As to quaternary structure, homotetramer.

The protein localises to the cytoplasm. The catalysed reaction is L-citrulline + L-aspartate + ATP = 2-(N(omega)-L-arginino)succinate + AMP + diphosphate + H(+). Its pathway is amino-acid biosynthesis; L-arginine biosynthesis; L-arginine from L-ornithine and carbamoyl phosphate: step 2/3. This chain is Argininosuccinate synthase, found in Prochlorococcus marinus (strain MIT 9515).